A 317-amino-acid polypeptide reads, in one-letter code: Orange carotenoid-binding protein (317 aa).

One can recognise an OCP N-terminal domain in the interval 18–169; the sequence is ADVVPATIAR…DMGFTAGKDG (152 aa). Residues 34-38, 37-44, 80-83, 107-117, 125-129, 151-161, Tyr201, 245-250, 273-284, and Trp288 contribute to the echinenone site; these read EDQLA, LALIWFAY, TQAM, LGFWYRLGELM, IPAGY, ITVLRNAVVDM, CQNLKL, and VQTPWFGGNVGM.

Belongs to the orange carotenoid-binding protein family. In terms of assembly, monomer. Interacts with the APC core of the phycobilisome (PB), probably at a ratio of 1:1 in a light-independent manner; possibly only OCP-R binds to PBs. Interacts with FRP. Detachment from PBs is accelerated by FPR. It depends on 3'-hydroxyechinenone as a cofactor. Post-translationally, proteolytically cleaved into a red 16.7 kDa form named red carotenoid-binding protein (RCP) which lacks 15 residues from the N-terminus and approximately 150 residues from the C-terminus.

Its subcellular location is the cellular thylakoid membrane. In terms of biological role, acts as a blue-light photoreceptor and photo-protectant. Essential for inhibiting damaged induced by excess blue-green light via a process known as non-photochemical quenching (NPQ). In the dark or dim light the stable inactive form (OCP-O) is orange, upon illumination with blue-green light it converts to a metastable active red form (OCP-R), inducing energy dissipation, quenching cellular fluorescence via NPQ. One OCP-R molecule is sufficient to quench 1 phycobilisome. More OCP-R accumulates under high-light and low temperature; in the dark OCP-R spontaneously reverts to OCP-O. Reversion of OCP-O is accelerated by FRP. A kinetic study suggests conversion of OCP-O to OCP-R is limited by cis-trans proline isomerization of either Gln224-Pro225 or Pro225-Pro226. This is Orange carotenoid-binding protein from Synechocystis sp. (strain ATCC 27184 / PCC 6803 / Kazusa).